The following is a 499-amino-acid chain: Endoglucanase 3 (499 aa).

The signal sequence occupies residues 1 to 19 (MALLRCLFLLAVLLPHRNA). The active-site Nucleophile is D88. Catalysis depends on residues H416, D467, and E476.

This sequence belongs to the glycosyl hydrolase 9 (cellulase E) family. As to expression, expressed in flowers.

It is found in the secreted. It carries out the reaction Endohydrolysis of (1-&gt;4)-beta-D-glucosidic linkages in cellulose, lichenin and cereal beta-D-glucans.. This chain is Endoglucanase 3 (GLU8), found in Oryza sativa subsp. japonica (Rice).